We begin with the raw amino-acid sequence, 417 residues long: Lysosome-associated membrane glycoprotein 1 (417 aa).

An N-terminal signal peptide occupies residues 1–28 (MAAPGSARRPLLLLLLLLLLGLMHCASA). A first lumenal domain region spans residues 29–194 (AMFMVKNGNG…SRGETRCEQD (166 aa)). Topologically, residues 29–382 (AMFMVKNGNG…EECLLDENSM (354 aa)) are lumenal. N-linked (GlcNAc...) asparagine glycosylation is found at asparagine 37 and asparagine 45. A disulfide bridge links cysteine 41 with cysteine 80. Asparagine 62 carries an N-linked (GlcNAc...) (polylactosaminoglycan) asparagine glycan. Residues asparagine 76, asparagine 84, asparagine 103, and asparagine 107 are each glycosylated (N-linked (GlcNAc...) asparagine). Residues asparagine 121 and asparagine 130 are each glycosylated (N-linked (GlcNAc...) (polylactosaminoglycan) asparagine). Cysteine 155 and cysteine 191 are oxidised to a cystine. Asparagine 165 and asparagine 181 each carry an N-linked (GlcNAc...) asparagine glycan. The interval 184-221 (FSRGETRCEQDRPSPTTAPPAPPSPSPSPVPKSPSVDK) is disordered. The tract at residues 195 to 227 (RPSPTTAPPAPPSPSPSPVPKSPSVDKYNVSGT) is hinge. Serine 197 carries an O-linked (GalNAc...) serine; partial glycan. 2 O-linked (GalNAc...) threonine glycosylation sites follow: threonine 199 and threonine 200. Residues 199 to 215 (TTAPPAPPSPSPSPVPK) show a composition bias toward pro residues. Residues serine 207, serine 209, and serine 211 are each glycosylated (O-linked (GalNAc...) serine). Residues asparagine 223 and asparagine 228 are each glycosylated (N-linked (GlcNAc...) (polylactosaminoglycan) asparagine). The tract at residues 228–382 (NGTCLLASMG…EECLLDENSM (155 aa)) is second lumenal domain. The cysteines at positions 231 and 269 are disulfide-linked. 5 N-linked (GlcNAc...) asparagine glycosylation sites follow: asparagine 241, asparagine 249, asparagine 261, asparagine 293, and asparagine 322. Cysteine 338 and cysteine 375 are joined by a disulfide. Residues 383 to 410 (LIPIAVGGALAGLVLIVLIAYLVGRKRS) traverse the membrane as a helical segment. Over 411 to 417 (HAGYQTI) the chain is Cytoplasmic.

Belongs to the LAMP family. Interacts with ABCB9; this interaction strongly stabilizes ABCB9 and protects ABCB9 against lysosomal degradation. Interacts with FURIN. Interacts with TMEM175; inhibiting the proton channel activity of TMEM175. In terms of assembly, (Microbial infection) Interacts with Lassa virus protein glycoprotein. As to quaternary structure, (Microbial infection) Interacts with mumps virus protein F; this interaction promotes protein F cleavage by FURIN. O- and N-glycosylated; some of the 18 N-linked glycans are polylactosaminoglycans. In terms of processing, (Microbial infection) The glycosylation of Asn-76 is essential for Lassa virus entry into cells.

It localises to the lysosome membrane. The protein localises to the endosome membrane. It is found in the late endosome membrane. The protein resides in the cell membrane. Its subcellular location is the cytolytic granule membrane. Its function is as follows. Lysosomal membrane glycoprotein which plays an important role in lysosome biogenesis, lysosomal pH regulation, autophagy and cholesterol homeostasis. Acts as an important regulator of lysosomal lumen pH regulation by acting as a direct inhibitor of the proton channel TMEM175, facilitating lysosomal acidification for optimal hydrolase activity. Also plays an important role in NK-cells cytotoxicity. Mechanistically, participates in cytotoxic granule movement to the cell surface and perforin trafficking to the lytic granule. In addition, protects NK-cells from degranulation-associated damage induced by their own cytotoxic granule content. Presents carbohydrate ligands to selectins. Functionally, (Microbial infection) Acts as a receptor for Lassa virus glycoprotein. Also promotes fusion of the virus with host membrane in less acidic endosomes. (Microbial infection) Supports the FURIN-mediated cleavage of mumps virus fusion protein F by interacting with both FURIN and the unprocessed form but not the processed form of the viral protein F. The polypeptide is Lysosome-associated membrane glycoprotein 1 (Homo sapiens (Human)).